The following is a 173-amino-acid chain: Ribosome maturation factor RimM (173 aa).

The region spanning E95–F173 is the PRC barrel domain.

This sequence belongs to the RimM family. In terms of assembly, binds ribosomal protein uS19.

Its subcellular location is the cytoplasm. Its function is as follows. An accessory protein needed during the final step in the assembly of 30S ribosomal subunit, possibly for assembly of the head region. Essential for efficient processing of 16S rRNA. May be needed both before and after RbfA during the maturation of 16S rRNA. It has affinity for free ribosomal 30S subunits but not for 70S ribosomes. In Hahella chejuensis (strain KCTC 2396), this protein is Ribosome maturation factor RimM.